The following is a 593-amino-acid chain: MLO-like protein 8 (593 aa).

The Extracellular portion of the chain corresponds to 1 to 46 (MGIIDGSLLRRLICLCLWCLLGGGVTVVTAEDEKKVVHKQLNQTPT). Residues 47 to 67 (WAVAAVCTFFIVVSVLLEKLL) traverse the membrane as a helical segment. Residues 68–92 (HKVGKVLWDRHKTALLDALEKIKAE) lie on the Cytoplasmic side of the membrane. The helical transmembrane segment at 93–113 (LMVLGFISLLLTFGQTYILDI) threads the bilayer. The Extracellular portion of the chain corresponds to 114–181 (CIPSHVARTM…ISAEALHQLH (68 aa)). The chain crosses the membrane as a helical span at residues 182–202 (ILIFFLAIFHVLYSFLTMMLG). Residues 203–304 (RLKIRGWKHW…IKRSLEDDFK (102 aa)) are Cytoplasmic-facing. A helical transmembrane segment spans residues 305–325 (VVVGVSPVLWGSFVLFLLLNI). Residue Asp326 is a topological domain, extracellular. Residues 327–347 (GFKMMFIGTAIPVIIILAVGT) traverse the membrane as a helical segment. The Cytoplasmic portion of the chain corresponds to 348-393 (KLQAIMTRMALGITDRHAVVQGMPLVQGNDEYFWFGRPHLILHLMH). A helical membrane pass occupies residues 394-414 (FALFQNAFQITYFFWIWYSFG). The Extracellular segment spans residues 415 to 430 (SDSCYHPNFKIALVKV). Residues 431 to 451 (AIALGVLCLCSYITLPLYALV) form a helical membrane-spanning segment. Residues 452–593 (TQMGSRMKKS…APSNESSQDR (142 aa)) are Cytoplasmic-facing. Residues 465 to 486 (EQTSKALKKWRMAVKKKKGVKA) form a calmodulin-binding region. The tract at residues 481 to 593 (KKGVKATTKR…APSNESSQDR (113 aa)) is disordered. Residues 489–512 (KRLGGDGSASPTASTVRSTSSVRS) show a composition bias toward low complexity. Residues 528-539 (LDPETSDLDTDN) are compositionally biased toward acidic residues. A compositionally biased stretch (basic and acidic residues) spans 567–579 (TSRDTETDSKEFS).

Belongs to the MLO family.

Its subcellular location is the membrane. Functionally, may be involved in modulation of pathogen defense and leaf cell death. Activity seems to be regulated by Ca(2+)-dependent calmodulin binding and seems not to require heterotrimeric G proteins. This chain is MLO-like protein 8 (MLO8), found in Arabidopsis thaliana (Mouse-ear cress).